We begin with the raw amino-acid sequence, 168 residues long: Putative gustatory receptor clone PTE03 (168 aa).

Over 1–25 the chain is Extracellular; that stretch reads TTVPKMLINLQKQNKAISYAGCITQ. Residues Cys-22 and Cys-104 are joined by a disulfide bond. The helical transmembrane segment at 26–45 threads the bilayer; sequence LSFVLLFAGMENFLLAAMAY. Topologically, residues 46–67 are cytoplasmic; sequence DRYVAICKPLRYTAIMKAHLCL. Residues 68–88 form a helical membrane-spanning segment; sequence VMTLLSLCISIVDALLHGLMI. At 89-121 the chain is on the extracellular side; the sequence is LRLSFCTFLEIPHYFCELYQVIKLSCSDTLINN. The chain crosses the membrane as a helical span at residues 122 to 143; the sequence is ILVYTMTSTLGGVPLGGIIFSY. Residues 144-165 lie on the Cytoplasmic side of the membrane; the sequence is FKIISSILRMPSSGSRHRAFST. A helical transmembrane segment spans residues 166-168; it reads CGS.

The protein belongs to the G-protein coupled receptor 1 family. Tongue specific.

Its subcellular location is the cell membrane. Its function is as follows. Possible taste receptor. The protein is Putative gustatory receptor clone PTE03 (Olr1145) of Rattus norvegicus (Rat).